We begin with the raw amino-acid sequence, 337 residues long: Retrovirus-related Pol polyprotein from type-1 retrotransposable element R1 (337 aa).

The Reverse transcriptase domain maps to 1–118; it reads GCPQGSISGP…KSARYLGVCM (118 aa). The tract at residues 253–337 is nucleic acid-binding endonuclease; that stretch reads KRARSCKLMK…ACPCGAPRED (85 aa).

The enzyme catalyses DNA(n) + a 2'-deoxyribonucleoside 5'-triphosphate = DNA(n+1) + diphosphate. In Nasonia vitripennis (Parasitic wasp), this protein is Retrovirus-related Pol polyprotein from type-1 retrotransposable element R1.